The primary structure comprises 297 residues: MGRFPLAAKPLQVAILGTGNIGTDLLLKIQRSQLLKCVAFVGRSSQSSGMVKARSLGVPCSDLSIEYFRQNGEKIDLVFDATSAKDHLVHAPILRELGIRVIDLTPAKVGKMCIPAVHRSSLLNEWNLNMVTCGGQASSPLAWAIGQTQGSIEYLEVVSSIASKSAGPATRLNLDEYIHTTEKALAELSGAKNTKAILVLNPAEPCIDMQTTVFAKVDSPDLLKLQKLLSEVIPRTQAYVPGYQVALGPIVDNGRISIMVRVRGVGDYLPEYAGNLDIINCAAIAMAEEYAKAAHEQ.

NAD(+) is bound at residue 18–21 (TGNI). Residue Cys133 is the Acyl-thioester intermediate of the active site. NAD(+) is bound by residues 165–173 (SAGPATRLN) and Asn275.

This sequence belongs to the acetaldehyde dehydrogenase family.

It catalyses the reaction acetaldehyde + NAD(+) + CoA = acetyl-CoA + NADH + H(+). The polypeptide is Acetaldehyde dehydrogenase (Spirochaeta aurantia).